Reading from the N-terminus, the 137-residue chain is Nucleoside diphosphate kinase (137 aa).

Residues Lys9, Phe57, Arg85, Thr91, Arg102, and Asn112 each coordinate ATP. His115 functions as the Pros-phosphohistidine intermediate in the catalytic mechanism.

The protein belongs to the NDK family. In terms of assembly, homotetramer. Mg(2+) is required as a cofactor.

It is found in the cytoplasm. It carries out the reaction a 2'-deoxyribonucleoside 5'-diphosphate + ATP = a 2'-deoxyribonucleoside 5'-triphosphate + ADP. It catalyses the reaction a ribonucleoside 5'-diphosphate + ATP = a ribonucleoside 5'-triphosphate + ADP. Functionally, major role in the synthesis of nucleoside triphosphates other than ATP. The ATP gamma phosphate is transferred to the NDP beta phosphate via a ping-pong mechanism, using a phosphorylated active-site intermediate. The polypeptide is Nucleoside diphosphate kinase (Desulfotalea psychrophila (strain LSv54 / DSM 12343)).